A 316-amino-acid chain; its full sequence is Probable cell division protein WhiA (316 aa).

A DNA-binding region (H-T-H motif) is located at residues 275 to 309 (TLKELGEMVESGKISKSGINHRLRKLDQIAEQLRN).

The protein belongs to the WhiA family.

Functionally, involved in cell division and chromosome segregation. The protein is Probable cell division protein WhiA of Bacillus pumilus (strain SAFR-032).